We begin with the raw amino-acid sequence, 266 residues long: Putative pyruvate, phosphate dikinase regulatory protein (266 aa).

ADP is bound at residue 149-156 (GVSRTSKT).

The protein belongs to the pyruvate, phosphate/water dikinase regulatory protein family. PDRP subfamily.

The catalysed reaction is N(tele)-phospho-L-histidyl/L-threonyl-[pyruvate, phosphate dikinase] + ADP = N(tele)-phospho-L-histidyl/O-phospho-L-threonyl-[pyruvate, phosphate dikinase] + AMP + H(+). It carries out the reaction N(tele)-phospho-L-histidyl/O-phospho-L-threonyl-[pyruvate, phosphate dikinase] + phosphate + H(+) = N(tele)-phospho-L-histidyl/L-threonyl-[pyruvate, phosphate dikinase] + diphosphate. Functionally, bifunctional serine/threonine kinase and phosphorylase involved in the regulation of the pyruvate, phosphate dikinase (PPDK) by catalyzing its phosphorylation/dephosphorylation. In Geobacillus kaustophilus (strain HTA426), this protein is Putative pyruvate, phosphate dikinase regulatory protein.